Consider the following 120-residue polypeptide: MTLNQILKFKRKKSVKKKKTPALLSSPQKKGICIKVYTTTPKKPNSALRKVCRVKLSNKNEITAYIPGEGHNLQEHSNVLVRGGRVKDLPGVKYHIIRNVYDLSGVINRKTSRSKYGKKK.

Asp88 is subject to 3-methylthioaspartic acid.

The protein belongs to the universal ribosomal protein uS12 family. In terms of assembly, part of the 30S ribosomal subunit. Contacts proteins S8 and S17. May interact with IF1 in the 30S initiation complex.

With S4 and S5 plays an important role in translational accuracy. In terms of biological role, interacts with and stabilizes bases of the 16S rRNA that are involved in tRNA selection in the A site and with the mRNA backbone. Located at the interface of the 30S and 50S subunits, it traverses the body of the 30S subunit contacting proteins on the other side and probably holding the rRNA structure together. The combined cluster of proteins S8, S12 and S17 appears to hold together the shoulder and platform of the 30S subunit. This Carsonella ruddii (strain PV) protein is Small ribosomal subunit protein uS12.